Consider the following 102-residue polypeptide: Small ribosomal subunit protein uS10 (102 aa).

It belongs to the universal ribosomal protein uS10 family. Part of the 30S ribosomal subunit.

Its function is as follows. Involved in the binding of tRNA to the ribosomes. This Rhodospirillum centenum (strain ATCC 51521 / SW) protein is Small ribosomal subunit protein uS10.